A 436-amino-acid polypeptide reads, in one-letter code: UPF0597 protein YhaM (436 aa).

This sequence belongs to the UPF0597 family.

In Salmonella heidelberg (strain SL476), this protein is UPF0597 protein YhaM.